Reading from the N-terminus, the 241-residue chain is Probable transcriptional regulatory protein SAR11_0592 (241 aa).

The disordered stretch occupies residues 1-24 (MSGHSKWASIKHSKGKADKQRSKV).

The protein belongs to the TACO1 family.

The protein localises to the cytoplasm. This is Probable transcriptional regulatory protein SAR11_0592 from Pelagibacter ubique (strain HTCC1062).